We begin with the raw amino-acid sequence, 128 residues long: uncharacterized protein (128 aa).

Transmembrane regions (helical) follow at residues 45–65 and 95–115; these read GYFHWSLITQNYIIFLFLFPF and FMSHIPVLTVISYCVCCLSCF.

It localises to the membrane. This is an uncharacterized protein from Saccharomyces cerevisiae (strain ATCC 204508 / S288c) (Baker's yeast).